Here is a 1140-residue protein sequence, read N- to C-terminus: MTTAAERKYINIRKRLDQLGYRQTLSVDSLPLVEKLFSDLVHTTESLRQCRLSSGKAEKESANLDFVLEPYKLENTRLNKENNELYLELMKLRECSDKHIKDLKTTLKKCSRETADLKFLNNQYVHKVKVLEKESKAKDEKIQQLQEKNLRAVVQTPGGRKRNIAFRRQRMQIDEPAPPSEVSAYPVPQPEDPYIADLLQVADNRIQELQEEVQQLQEKLAQMEKGVLDYSKQIELREREIQRLSLALDGGCSPDVLSLETRNKTNEKLIAHLNVQVDFLQQANKELEKHIQELMETKETVTTEVVNLSNRNEKLCQELTEIDQLAQRLERHKEQVLETADKELGEAKKEIKRNLCEMRNLEEKMSKLQWELDLSHKEKERLNSELLLKSDLETVVHQLEQEKQRLSKKLQSFAVTERELTLEVERMRLEHGIKRRDKSPSRLDTFLKGIEEERDYYKKELEKLQHLIQRRSCAINYSAREKPPVVKCSEKGDCSTDVHLITRERDELQRMLERFEKYMEDIQSNVKLLTAERDKLNVLYKEAKEELSTLRKESTNSTSPNHLVSCVEKEKERALSELRRITAEKEALREKLKNIQERNAVGKSDLEKTIEHLTYINHQLENEKYELQSKMLMMKETVESLENKSKLQAQKLSHVTGDSSHQKTEMTSLRIVSEQLQRSLDDCQHRLSIKRGELESAQEQIKMLEQKLENLSHRMTVQSEETHAMKKTIGVMDKEKDFLQETVDEKTEKIANLQESLLSKEKVIAQLKVTVAEYETSLNQLQETLTTRDREINSLRRQLDASHKELDDVGKSREISFKENRRLQDDLATMARENQEISLELEAAVQEKEEMKSRVHKYITEVSRWESLMAAKEKENKDLLDRFQMLHSRAEDWEVKAQQAEGENSSVRLELLSIDTERRHLRERVDLLEKEIQEHINAHHAYESQISSMAKAMSQLEEELRRHESEKATMLGDVSSLRELCIKLDSGKDVMTQQLNSKSLELERAVAELENVKSESELLKKQLTNERQTIKNLESLLATNRDKEFQSHLTSHEKDTEIQLLKEKLNLSESKLTTQSRETSMLRTKVTQLQTDYDNLKRQMSNEKYERERAIQEMRRLGLPTSPLSSTLKSPVQTPDHINA.

The tract at residues 11–64 is homodimerization; sequence NIRKRLDQLGYRQTLSVDSLPLVEKLFSDLVHTTESLRQCRLSSGKAEKESANL. Coiled coils occupy residues 75–151 and 199–416; these read NTRL…KNLR and LQVA…FAVT. S439 is modified (phosphoserine). 3 coiled-coil regions span residues 447 to 644, 668 to 1036, and 1079 to 1113; these read LKGI…LENK, SLRI…LESL, and TSML…AIQE. The residue at position 688 (S688) is a Phosphoserine. Residues 1117–1131 show a composition bias toward low complexity; that stretch reads LGLPTSPLSSTLKSP. Residues 1117–1140 are disordered; that stretch reads LGLPTSPLSSTLKSPVQTPDHINA. Residue T1121 is modified to Phosphothreonine. A Phosphoserine modification is found at S1130. Residue T1134 is modified to Phosphothreonine.

Belongs to the CEP135/TSGA10 family. In terms of assembly, homodimer. Interacts with CEP250. Interacts with DCTN2.

It localises to the cytoplasm. Its subcellular location is the cytoskeleton. It is found in the microtubule organizing center. The protein resides in the centrosome. The protein localises to the centriole. In terms of biological role, centrosomal microtubule-binding protein involved in centriole biogenesis. Acts as a scaffolding protein during early centriole biogenesis. Required for the targeting of centriole satellite proteins to centrosomes such as of PCM1, SSX2IP and CEP290 and recruitment of WRAP73 to centrioles. Also required for centriole-centriole cohesion during interphase by acting as a platform protein for CEP250 at the centriole. Required for the recruitment of CEP295 to the proximal end of new-born centrioles at the centriolar microtubule wall during early S phase in a PLK4-dependent manner. This is Centrosomal protein of 135 kDa (Cep135) from Mus musculus (Mouse).